A 401-amino-acid chain; its full sequence is Haptoglobin (401 aa).

The signal sequence occupies residues 1–18 (MSALQAVVTLLLCGQLLA). 2 Sushi domains span residues 28–83 (DSCP…ECEE) and 85–142 (DSCP…ECEA). 3 disulfides stabilise this stretch: cysteine 49-cysteine 81, cysteine 106-cysteine 140, and cysteine 144-cysteine 261. A Peptidase S1 domain is found at 157-399 (IIGGSLDAKG…ILDWVRKTIA (243 aa)). N-linked (GlcNAc...) asparagine glycosylation is found at asparagine 286 and asparagine 316. 2 disulfides stabilise this stretch: cysteine 304/cysteine 335 and cysteine 346/cysteine 376. Residues 313–318 (APKNKT) form an interaction with CD163 region.

This sequence belongs to the peptidase S1 family. In terms of assembly, tetramer of two alpha and two beta chains; disulfide-linked. The hemoglobin/haptoglobin complex is composed of a haptoglobin dimer bound to two hemoglobin alpha-beta dimers. Interacts with CD163. Interacts with ERGIC3. Expressed by the liver and secreted in plasma.

It is found in the secreted. Its subcellular location is the extracellular space. As a result of hemolysis, hemoglobin is found to accumulate in the kidney and is secreted in the urine. Haptoglobin captures, and combines with free plasma hemoglobin to allow hepatic recycling of heme iron and to prevent kidney damage. Haptoglobin also acts as an antioxidant, has antibacterial activity and plays a role in modulating many aspects of the acute phase response. Hemoglobin/haptoglobin complexes are rapidly cleared by the macrophage CD163 scavenger receptor expressed on the surface of liver Kupfer cells through an endocytic lysosomal degradation pathway. The sequence is that of Haptoglobin (HP) from Bos taurus (Bovine).